The sequence spans 213 residues: Translation initiation factor IF-3 (213 aa).

The tract at residues 193–213 (EKIASLPPLPPDNSGEPEDDE) is disordered.

This sequence belongs to the IF-3 family. Monomer.

It is found in the cytoplasm. In terms of biological role, IF-3 binds to the 30S ribosomal subunit and shifts the equilibrium between 70S ribosomes and their 50S and 30S subunits in favor of the free subunits, thus enhancing the availability of 30S subunits on which protein synthesis initiation begins. The sequence is that of Translation initiation factor IF-3 from Chlorobaculum tepidum (strain ATCC 49652 / DSM 12025 / NBRC 103806 / TLS) (Chlorobium tepidum).